A 185-amino-acid polypeptide reads, in one-letter code: Casparian strip membrane protein 5 (185 aa).

The Cytoplasmic portion of the chain corresponds to 1-25; it reads MKAEAVESGEASTIIAAPKRGINRG. Residues 26–46 traverse the membrane as a helical segment; that stretch reads ISIADLILRGVAAIGTFASAL. Residues 47 to 75 are Extracellular-facing; it reads TMGTTSETLTIFTQPIMIRAKYNDLPSLT. A helical transmembrane segment spans residues 76 to 96; sequence FFVIANSIVCGYLVLSIPLSI. Residues 97–108 are Cytoplasmic-facing; that stretch reads SHFIRREARITR. The helical transmembrane segment at 109 to 129 threads the bilayer; the sequence is IILVIFDTAMVELLTAGASAA. At 130–160 the chain is on the extracellular side; that stretch reads TVVVYLAHKRNANWLAICQQFNNFCERISGS. A helical membrane pass occupies residues 161 to 181; that stretch reads LIGSFASIIMIMLIIITSAVA. The Cytoplasmic segment spans residues 182-185; that stretch reads LSRH.

The protein belongs to the Casparian strip membrane proteins (CASP) family. As to quaternary structure, homodimer and heterodimers.

Its subcellular location is the cell membrane. Its function is as follows. Regulates membrane-cell wall junctions and localized cell wall deposition. Required for establishment of the Casparian strip membrane domain (CSD) and the subsequent formation of Casparian strips, a cell wall modification of the root endodermis that determines an apoplastic barrier between the intraorganismal apoplasm and the extraorganismal apoplasm and prevents lateral diffusion. This is Casparian strip membrane protein 5 from Populus trichocarpa (Western balsam poplar).